The following is a 1145-amino-acid chain: DNA polymerase II large subunit (1145 aa).

Residues 284–303 are disordered; sequence KSSSESDEDEETDGKPKIKP.

This sequence belongs to the archaeal DNA polymerase II family. In terms of assembly, heterodimer of a large subunit and a small subunit.

It carries out the reaction DNA(n) + a 2'-deoxyribonucleoside 5'-triphosphate = DNA(n+1) + diphosphate. The catalysed reaction is Exonucleolytic cleavage in the 3'- to 5'-direction to yield nucleoside 5'-phosphates.. Its function is as follows. Possesses two activities: a DNA synthesis (polymerase) and an exonucleolytic activity that degrades single-stranded DNA in the 3'- to 5'-direction. Has a template-primer preference which is characteristic of a replicative DNA polymerase. This chain is DNA polymerase II large subunit, found in Methanococcoides burtonii (strain DSM 6242 / NBRC 107633 / OCM 468 / ACE-M).